A 400-amino-acid chain; its full sequence is CinA-like protein (400 aa).

The protein belongs to the CinA family.

The polypeptide is CinA-like protein (Shigella flexneri).